A 295-amino-acid polypeptide reads, in one-letter code: Sulfotransferase 1A2 (295 aa).

48–53 (KSGTTW) lines the 3'-phosphoadenylyl sulfate pocket. Residue 106–108 (KTH) coordinates substrate. The active-site Proton acceptor is His108. 3'-phosphoadenylyl sulfate contacts are provided by residues Arg130, Ser138, Tyr193, 227 to 232 (TSFKEM), and 255 to 259 (FMRKG).

Belongs to the sulfotransferase 1 family. Homodimer.

It is found in the cytoplasm. The catalysed reaction is a phenol + 3'-phosphoadenylyl sulfate = an aryl sulfate + adenosine 3',5'-bisphosphate + H(+). Its function is as follows. Sulfotransferase that utilizes 3'-phospho-5'-adenylyl sulfate (PAPS) as sulfonate donor to catalyze the sulfate conjugation of catecholamines, phenolic drugs and neurotransmitters. Is also responsible for the sulfonation and activation of minoxidil. Mediates the metabolic activation of carcinogenic N-hydroxyarylamines to DNA binding products and could so participate as modulating factor of cancer risk. This Homo sapiens (Human) protein is Sulfotransferase 1A2 (SULT1A2).